Reading from the N-terminus, the 190-residue chain is Hypoxanthine/guanine phosphoribosyltransferase (190 aa).

This sequence belongs to the purine/pyrimidine phosphoribosyltransferase family. Archaeal HPRT subfamily. Homodimer.

The protein resides in the cytoplasm. It carries out the reaction IMP + diphosphate = hypoxanthine + 5-phospho-alpha-D-ribose 1-diphosphate. The enzyme catalyses GMP + diphosphate = guanine + 5-phospho-alpha-D-ribose 1-diphosphate. It functions in the pathway purine metabolism; IMP biosynthesis via salvage pathway; IMP from hypoxanthine: step 1/1. In terms of biological role, catalyzes a salvage reaction resulting in the formation of IMP that is energically less costly than de novo synthesis. The polypeptide is Hypoxanthine/guanine phosphoribosyltransferase (Methanobacterium lacus (strain AL-21)).